The primary structure comprises 175 residues: uncharacterized protein (175 aa).

2 consecutive transmembrane segments (helical) span residues 21 to 41 and 50 to 70; these read IVLD…MGPI and LVGL…VFVI.

Its subcellular location is the membrane. This is an uncharacterized protein from Saccharomyces cerevisiae (strain ATCC 204508 / S288c) (Baker's yeast).